The chain runs to 368 residues: Probable replication factor C subunit 5 (368 aa).

Residue 69–76 (GPPGTGKT) coordinates ATP.

This sequence belongs to the activator 1 small subunits family. In terms of assembly, heteropentamer of various rfc subunits that forms a complex (RFC) with PCNA in the presence of ATP.

It is found in the nucleus. The elongation of primed DNA templates by DNA polymerase delta and epsilon requires the action of the accessory proteins proliferating cell nuclear antigen (PCNA) and activator 1. The protein is Probable replication factor C subunit 5 of Caenorhabditis elegans.